The sequence spans 520 residues: Laccase (520 aa).

The signal sequence occupies residues M1–A21. 2 Plastocyanin-like domains span residues I23–Y148 and V160–Y302. Residues N72 and N75 are each glycosylated (N-linked (GlcNAc...) asparagine). 4 residues coordinate Cu cation: H85, H87, H130, and H132. Disulfide bonds link C106-C509 and C138-C226. N-linked (GlcNAc...) asparagine glycans are attached at residues N210, N229, and N354. The Plastocyanin-like 3 domain maps to T369 to D491. H416, H419, H421, H473, C474, H475, and H479 together coordinate Cu cation.

The protein belongs to the multicopper oxidase family. It depends on Cu cation as a cofactor.

The protein resides in the secreted. It catalyses the reaction 4 hydroquinone + O2 = 4 benzosemiquinone + 2 H2O. In terms of biological role, lignin degradation and detoxification of lignin-derived products. Has activity towards guaiacol. This is Laccase from Trametes hirsuta (White-rot fungus).